The following is a 196-amino-acid chain: GTP cyclohydrolase-2 (196 aa).

49-53 (RVHSE) is a binding site for GTP. The Zn(2+) site is built by C54, C65, and C67. Residues Q70, 92-94 (EGR), and T114 contribute to the GTP site. The active-site Proton acceptor is D126. Residue R128 is the Nucleophile of the active site. Residues T149 and K154 each coordinate GTP.

Belongs to the GTP cyclohydrolase II family. As to quaternary structure, homodimer. Zn(2+) serves as cofactor.

The catalysed reaction is GTP + 4 H2O = 2,5-diamino-6-hydroxy-4-(5-phosphoribosylamino)-pyrimidine + formate + 2 phosphate + 3 H(+). It participates in cofactor biosynthesis; riboflavin biosynthesis; 5-amino-6-(D-ribitylamino)uracil from GTP: step 1/4. In terms of biological role, catalyzes the conversion of GTP to 2,5-diamino-6-ribosylamino-4(3H)-pyrimidinone 5'-phosphate (DARP), formate and pyrophosphate. In Shigella boydii serotype 18 (strain CDC 3083-94 / BS512), this protein is GTP cyclohydrolase-2.